Consider the following 233-residue polypeptide: Probable translation initiation factor, mitochondrial (233 aa).

The N-terminal 39 residues, 1–39 (MNSYLQFPHRKLFIQFSYSLTSVFRKCQSRTFMNSQFAS), are a transit peptide targeting the mitochondrion.

Belongs to the IF-3 family.

Its subcellular location is the mitochondrion. May be involved in mitochondrial translation initiation. This Schizosaccharomyces pombe (strain 972 / ATCC 24843) (Fission yeast) protein is Probable translation initiation factor, mitochondrial.